Here is a 95-residue protein sequence, read N- to C-terminus: MVRIRLTRMGKRHQPFYRIVVVDSRKRRDGAYIESLGYYNPLKEGEIKIDVERAVEWILKGAQPSDTVRDIFRKFGVMKRVHEIKYGKKEEATAE.

Belongs to the bacterial ribosomal protein bS16 family.

This Thermotoga maritima (strain ATCC 43589 / DSM 3109 / JCM 10099 / NBRC 100826 / MSB8) protein is Small ribosomal subunit protein bS16.